The following is a 93-amino-acid chain: Small ribosomal subunit protein bS18 (93 aa).

It belongs to the bacterial ribosomal protein bS18 family. As to quaternary structure, part of the 30S ribosomal subunit. Forms a tight heterodimer with protein bS6.

In terms of biological role, binds as a heterodimer with protein bS6 to the central domain of the 16S rRNA, where it helps stabilize the platform of the 30S subunit. This is Small ribosomal subunit protein bS18 from Paracidovorax citrulli (strain AAC00-1) (Acidovorax citrulli).